We begin with the raw amino-acid sequence, 195 residues long: Imidazoleglycerol-phosphate dehydratase (195 aa).

The protein belongs to the imidazoleglycerol-phosphate dehydratase family.

The protein resides in the cytoplasm. It carries out the reaction D-erythro-1-(imidazol-4-yl)glycerol 3-phosphate = 3-(imidazol-4-yl)-2-oxopropyl phosphate + H2O. The protein operates within amino-acid biosynthesis; L-histidine biosynthesis; L-histidine from 5-phospho-alpha-D-ribose 1-diphosphate: step 6/9. The chain is Imidazoleglycerol-phosphate dehydratase from Cereibacter sphaeroides (strain ATCC 17025 / ATH 2.4.3) (Rhodobacter sphaeroides).